Here is a 170-residue protein sequence, read N- to C-terminus: Lipoprotein signal peptidase (170 aa).

3 helical membrane passes run 5–25, 70–90, and 98–118; these read VYHQ…LDQG, WFFT…ICRV, and AFAL…RIIH. Residues Asp-123 and Asp-141 contribute to the active site. A helical membrane pass occupies residues 137–157; that stretch reads FNLADAAISLGAMVLIADLFI.

This sequence belongs to the peptidase A8 family.

It localises to the cell inner membrane. It carries out the reaction Release of signal peptides from bacterial membrane prolipoproteins. Hydrolyzes -Xaa-Yaa-Zaa-|-(S,diacylglyceryl)Cys-, in which Xaa is hydrophobic (preferably Leu), and Yaa (Ala or Ser) and Zaa (Gly or Ala) have small, neutral side chains.. It participates in protein modification; lipoprotein biosynthesis (signal peptide cleavage). Its function is as follows. This protein specifically catalyzes the removal of signal peptides from prolipoproteins. This Cellvibrio japonicus (strain Ueda107) (Pseudomonas fluorescens subsp. cellulosa) protein is Lipoprotein signal peptidase.